A 328-amino-acid polypeptide reads, in one-letter code: Extracellular exo-alpha-(1-&gt;5)-L-arabinofuranosidase (328 aa).

The tat-tyPE signal signal peptide spans 1–43; sequence MCTREAVRMSREHDLPEIPSRRLLLKGAAAAGALTAVPGVAHA. Catalysis depends on D60, which acts as the Proton acceptor. E236 functions as the Proton donor in the catalytic mechanism.

Belongs to the glycosyl hydrolase 43 family. Predicted to be exported by the Tat system. The position of the signal peptide cleavage has been experimentally proven.

The protein resides in the secreted. The catalysed reaction is Hydrolysis of terminal non-reducing alpha-L-arabinofuranoside residues in alpha-L-arabinosides.. It functions in the pathway glycan metabolism; L-arabinan degradation. Its function is as follows. Involved in the degradation of arabinan and is a key enzyme in the complete degradation of the plant cell wall. Catalyzes only the cleavage of terminal alpha-(1-&gt;5) arabinofuranosyl bonds of arabinan present in the arabinofuranosyl polysaccharides or oligosaccharides. It cannot act on other arabinose-containing polysaccharides and arabinoxylo-oligosaccharides. The polypeptide is Extracellular exo-alpha-(1-&gt;5)-L-arabinofuranosidase (Streptomyces chartreusis).